A 140-amino-acid polypeptide reads, in one-letter code: Chorion class A protein Ld2/Ld41 (140 aa).

The first 21 residues, 1–21 (MNSFALLLVCIQACLVQSVFS), serve as a signal peptide directing secretion.

It belongs to the chorion protein family.

Its function is as follows. This protein is one of many from the eggshell of the gypsy moth. The polypeptide is Chorion class A protein Ld2/Ld41 (Lymantria dispar (Gypsy moth)).